The chain runs to 151 residues: Odorant-binding protein (151 aa).

2 disulfides stabilise this stretch: C38–C42 and C57–C149.

It belongs to the calycin superfamily. Lipocalin family. In terms of tissue distribution, expressed in salivary glands, hair and urine.

Its subcellular location is the secreted. Functionally, may act as a pheromone. The sequence is that of Odorant-binding protein from Phodopus sungorus (Striped hairy-footed hamster).